Here is a 156-residue protein sequence, read N- to C-terminus: Arginine repressor (156 aa).

This sequence belongs to the ArgR family.

It is found in the cytoplasm. The protein operates within amino-acid biosynthesis; L-arginine biosynthesis [regulation]. Regulates arginine biosynthesis genes. The polypeptide is Arginine repressor (Shewanella oneidensis (strain ATCC 700550 / JCM 31522 / CIP 106686 / LMG 19005 / NCIMB 14063 / MR-1)).